The sequence spans 182 residues: A-type ATP synthase subunit E (182 aa).

It belongs to the V-ATPase E subunit family. In terms of assembly, has multiple subunits with at least A(3), B(3), C, D, E, F, H, I and proteolipid K(x).

The protein resides in the cell membrane. Its function is as follows. Component of the A-type ATP synthase that produces ATP from ADP in the presence of a proton gradient across the membrane. The sequence is that of A-type ATP synthase subunit E from Methanothrix thermoacetophila (strain DSM 6194 / JCM 14653 / NBRC 101360 / PT) (Methanosaeta thermophila).